The chain runs to 322 residues: Putative nickel/cobalt efflux system HI_1248 (322 aa).

A run of 6 helical transmembrane segments spans residues 7–27 (GLVLLVIALALLVYFSPWFFL), 54–74 (AGTTLIFASFVYGVLHALGPG), 100–120 (LSSLMQGIVAITATTLLVVVL), 137–157 (TALLLLVFLGCYWIWQGLRAY), 228–248 (IFVLFLAYMLDLYSWGILAVL), and 294–314 (LIAGGIMLFFALSLLYGTTIS).

It belongs to the NiCoT transporter (TC 2.A.52) family.

Its subcellular location is the cell membrane. Functionally, efflux system for nickel and cobalt. This is Putative nickel/cobalt efflux system HI_1248 from Haemophilus influenzae (strain ATCC 51907 / DSM 11121 / KW20 / Rd).